Reading from the N-terminus, the 134-residue chain is Secreted RxLR effector protein 1 (134 aa).

An N-terminal signal peptide occupies residues 1–22; sequence MFCRSPLVAVILLVLATHIVLA. Positions 32–60 are disordered; that stretch reads SETVPSDSSQTTRKSTRRTTSVDNKRRLR. The segment covering 37-52 has biased composition (low complexity); sequence SDSSQTTRKSTRRTTS. Positions 57–79 match the RxLR-dEER motif; that stretch reads RRLRQQIMGKDGPVVNDVHAEER.

Belongs to the RxLR effector family.

It is found in the secreted. It localises to the host nucleus. Its function is as follows. Effector that acts as a broad suppressor of cell death to interrupt plant immunity. Inhibits cell death induced by cell death-inducing proteins, including the PAMP elicitor INF1 from P.infestans. The protein is Secreted RxLR effector protein 1 of Plasmopara viticola (Downy mildew of grapevine).